A 260-amino-acid polypeptide reads, in one-letter code: Putative protein phosphatase (260 aa).

The region spanning 9-254 is the PPM-type phosphatase domain; the sequence is FTGLSKKGPV…DNITAALVNL (246 aa).

The catalysed reaction is O-phospho-L-seryl-[protein] + H2O = L-seryl-[protein] + phosphate. The enzyme catalyses O-phospho-L-threonyl-[protein] + H2O = L-threonyl-[protein] + phosphate. The sequence is that of Putative protein phosphatase from Mycoplasma genitalium (strain ATCC 33530 / DSM 19775 / NCTC 10195 / G37) (Mycoplasmoides genitalium).